Reading from the N-terminus, the 282-residue chain is 1,4-dihydroxy-6-naphtoate synthase (282 aa).

Substrate is bound by residues 57–59 (KVS) and 109–110 (TA). Catalysis depends on histidine 153, which acts as the Proton acceptor.

It belongs to the MqnA/MqnD family. MqnD subfamily.

The catalysed reaction is cyclic dehypoxanthinylfutalosinate = 1,4-dihydroxy-6-naphthoate + dihydroxyacetone. The protein operates within quinol/quinone metabolism; menaquinone biosynthesis. Catalyzes the conversion of cyclic dehypoxanthine futalosine (cyclic DHFL) into 1,4-dihydroxy-6-naphthoate, a step in the biosynthesis of menaquinone (MK, vitamin K2). This is 1,4-dihydroxy-6-naphtoate synthase from Streptomyces coelicolor (strain ATCC BAA-471 / A3(2) / M145).